We begin with the raw amino-acid sequence, 152 residues long: Catabolic 3-dehydroquinase 1 (152 aa).

Y24 functions as the Proton acceptor in the catalytic mechanism. 3 residues coordinate substrate: N75, H81, and D88. The Proton donor role is filled by H101. Substrate contacts are provided by residues 102 to 103 and R112; that span reads VS.

Belongs to the type-II 3-dehydroquinase family. In terms of assembly, homododecamer. Adopts a ring-like structure, composed of an arrangement of two hexameric rings stacked on top of one another.

It carries out the reaction 3-dehydroquinate = 3-dehydroshikimate + H2O. It functions in the pathway aromatic compound metabolism; 3,4-dihydroxybenzoate biosynthesis; 3,4-dihydroxybenzoate from 3-dehydroquinate: step 1/2. Is involved in the catabolism of quinate. Allows the utilization of quinate as carbon source via the beta-ketoadipate pathway. The sequence is that of Catabolic 3-dehydroquinase 1 from Aspergillus terreus (strain NIH 2624 / FGSC A1156).